The following is a 551-amino-acid chain: Hydroxymethylpyrimidine/phosphomethylpyrimidine kinase THI21 (551 aa).

Gln64 serves as a coordination point for 4-amino-5-hydroxymethyl-2-methylpyrimidine.

This sequence in the N-terminal section; belongs to the ThiD family. In the C-terminal section; belongs to the thiaminase-2 family.

The enzyme catalyses 4-amino-5-hydroxymethyl-2-methylpyrimidine + ATP = 4-amino-2-methyl-5-(phosphooxymethyl)pyrimidine + ADP + H(+). It catalyses the reaction 4-amino-2-methyl-5-(phosphooxymethyl)pyrimidine + ATP = 4-amino-2-methyl-5-(diphosphooxymethyl)pyrimidine + ADP. Its pathway is cofactor biosynthesis; thiamine diphosphate biosynthesis; 4-amino-2-methyl-5-diphosphomethylpyrimidine from 5-amino-1-(5-phospho-D-ribosyl)imidazole: step 2/3. The protein operates within cofactor biosynthesis; thiamine diphosphate biosynthesis; 4-amino-2-methyl-5-diphosphomethylpyrimidine from 5-amino-1-(5-phospho-D-ribosyl)imidazole: step 3/3. Catalyzes the phosphorylation of hydroxymethylpyrimidine phosphate (HMP-P) to HMP-PP, and also probably that of HMP to HMP-P. This Saccharomyces cerevisiae (strain ATCC 204508 / S288c) (Baker's yeast) protein is Hydroxymethylpyrimidine/phosphomethylpyrimidine kinase THI21 (THI21).